The chain runs to 376 residues: Carbohydrate sulfotransferase 14 (376 aa).

The Cytoplasmic portion of the chain corresponds to 1 to 39 (MFPRPLTPLAAPNGAEPLGRALRRAPLGRARAGLGGPPL). A helical; Signal-anchor for type II membrane protein transmembrane segment spans residues 40-60 (LLPSMLMFAVIVASSGLLLMI). Over 61-376 (ERGILAEMKP…PNVTKEACQQ (316 aa)) the chain is Lumenal. N110 is a glycosylation site (N-linked (GlcNAc...) asparagine). 3'-phosphoadenylyl sulfate is bound by residues 155–161 (PKVACSN) and 213–221 (REPLERLLS). N368 is a glycosylation site (N-linked (GlcNAc...) asparagine).

The protein belongs to the sulfotransferase 2 family. In terms of tissue distribution, widely expressed. Expressed at high level in pituitary gland, placenta, uterus and thyroid.

It is found in the golgi apparatus membrane. It catalyses the reaction dermatan + n 3'-phosphoadenylyl sulfate = dermatan 4'-sulfate + n adenosine 3',5'-bisphosphate + n H(+). Catalyzes the transfer of sulfate to position 4 of the N-acetylgalactosamine (GalNAc) residue of dermatan sulfate. Plays a pivotal role in the formation of 4-0-sulfated IdoA blocks in dermatan sulfate. Transfers sulfate to the C-4 hydroxyl of beta1,4-linked GalNAc that is substituted with an alpha-linked iduronic acid (IdoUA) at the C-3 hydroxyl. Transfers sulfate more efficiently to GalNAc residues in -IdoUA-GalNAc-IdoUA- than in -GlcUA-GalNAc-GlcUA-sequences. Has preference for partially desulfated dermatan sulfate. Addition of sulfate to GalNAc may occur immediately after epimerization of GlcUA to IdoUA. Appears to have an important role in the formation of the cerebellar neural network during postnatal brain development. The sequence is that of Carbohydrate sulfotransferase 14 (CHST14) from Homo sapiens (Human).